A 203-amino-acid polypeptide reads, in one-letter code: UPF0637 protein SSP1683 (203 aa).

This sequence belongs to the UPF0637 family.

The protein is UPF0637 protein SSP1683 of Staphylococcus saprophyticus subsp. saprophyticus (strain ATCC 15305 / DSM 20229 / NCIMB 8711 / NCTC 7292 / S-41).